The sequence spans 263 residues: Tryptophan synthase alpha chain (263 aa).

Active-site proton acceptor residues include Glu49 and Asp60.

This sequence belongs to the TrpA family. As to quaternary structure, tetramer of two alpha and two beta chains.

It carries out the reaction (1S,2R)-1-C-(indol-3-yl)glycerol 3-phosphate + L-serine = D-glyceraldehyde 3-phosphate + L-tryptophan + H2O. It functions in the pathway amino-acid biosynthesis; L-tryptophan biosynthesis; L-tryptophan from chorismate: step 5/5. Functionally, the alpha subunit is responsible for the aldol cleavage of indoleglycerol phosphate to indole and glyceraldehyde 3-phosphate. The polypeptide is Tryptophan synthase alpha chain (Clostridium kluyveri (strain NBRC 12016)).